Reading from the N-terminus, the 69-residue chain is Small, acid-soluble spore protein A (69 aa).

Belongs to the alpha/beta-type SASP family.

In terms of biological role, SASP are bound to spore DNA. They are double-stranded DNA-binding proteins that cause DNA to change to an a-like conformation. They protect the DNA backbone from chemical and enzymatic cleavage and are thus involved in dormant spore's high resistance to UV light. In Bacillus subtilis (strain 168), this protein is Small, acid-soluble spore protein A (sspA).